The following is an 81-amino-acid chain: Acyl carrier protein (81 aa).

Residues 2–77 (ASIEERVVDI…EAIDFIEKEK (76 aa)) form the Carrier domain. Residue Ser37 is modified to O-(pantetheine 4'-phosphoryl)serine.

This sequence belongs to the acyl carrier protein (ACP) family. 4'-phosphopantetheine is transferred from CoA to a specific serine of apo-ACP by AcpS. This modification is essential for activity because fatty acids are bound in thioester linkage to the sulfhydryl of the prosthetic group.

Its subcellular location is the cytoplasm. The protein operates within lipid metabolism; fatty acid biosynthesis. Functionally, carrier of the growing fatty acid chain in fatty acid biosynthesis. This chain is Acyl carrier protein, found in Rhodopirellula baltica (strain DSM 10527 / NCIMB 13988 / SH1).